The following is a 99-amino-acid chain: ATP-dependent Clp protease adapter protein ClpS (99 aa).

The protein belongs to the ClpS family. Binds to the N-terminal domain of the chaperone ClpA.

In terms of biological role, involved in the modulation of the specificity of the ClpAP-mediated ATP-dependent protein degradation. The chain is ATP-dependent Clp protease adapter protein ClpS from Acetivibrio thermocellus (strain ATCC 27405 / DSM 1237 / JCM 9322 / NBRC 103400 / NCIMB 10682 / NRRL B-4536 / VPI 7372) (Clostridium thermocellum).